A 561-amino-acid chain; its full sequence is Potassium-transporting ATPase potassium-binding subunit (561 aa).

11 helical membrane-spanning segments follow: residues 5–25 (IELF…GTYM), 63–83 (KYAL…YFIL), 103–122 (LAFN…HYAG), 133–153 (IVIV…AAAI), 179–199 (LLPI…PQTF), 255–275 (IEML…GLMI), 281–301 (ALVL…GAVY), 380–400 (AGLQ…GLMV), 418–438 (LIAL…ALTV), 485–505 (IMTG…MLAV), and 531–551 (AIFI…AVIL).

Belongs to the KdpA family. As to quaternary structure, the system is composed of three essential subunits: KdpA, KdpB and KdpC.

The protein localises to the cell membrane. In terms of biological role, part of the high-affinity ATP-driven potassium transport (or Kdp) system, which catalyzes the hydrolysis of ATP coupled with the electrogenic transport of potassium into the cytoplasm. This subunit binds the extracellular potassium ions and delivers the ions to the membrane domain of KdpB through an intramembrane tunnel. This chain is Potassium-transporting ATPase potassium-binding subunit, found in Caldanaerobacter subterraneus subsp. tengcongensis (strain DSM 15242 / JCM 11007 / NBRC 100824 / MB4) (Thermoanaerobacter tengcongensis).